Here is a 115-residue protein sequence, read N- to C-terminus: Macrophage migration inhibitory factor (115 aa).

Pro-2 serves as the catalytic Proton acceptor; via imino nitrogen. The substrate site is built by Lys-33 and Ile-65. Lys-78 is subject to N6-acetyllysine; alternate. The residue at position 78 (Lys-78) is an N6-succinyllysine; alternate. Position 98 (Asn-98) interacts with substrate.

This sequence belongs to the MIF family. In terms of assembly, homotrimer. Interacts with CXCR2 extracellular domain. Interacts with the CD74 extracellular domain, USO1, COPS5 and BNIPL.

Its subcellular location is the secreted. It is found in the cytoplasm. The enzyme catalyses 3-phenylpyruvate = enol-phenylpyruvate. The catalysed reaction is L-dopachrome = 5,6-dihydroxyindole-2-carboxylate. In terms of biological role, pro-inflammatory cytokine involved in the innate immune response to bacterial pathogens. The expression of MIF at sites of inflammation suggests a role as mediator in regulating the function of macrophages in host defense. Counteracts the anti-inflammatory activity of glucocorticoids. Has phenylpyruvate tautomerase and dopachrome tautomerase activity (in vitro), but the physiological substrate is not known. It is not clear whether the tautomerase activity has any physiological relevance, and whether it is important for cytokine activity. The protein is Macrophage migration inhibitory factor of Homo sapiens (Human).